Consider the following 578-residue polypeptide: Forkhead box protein P1 (578 aa).

Residues 208 to 233 form a C2H2-type zinc finger; that stretch reads GVCKWPGCETICEDFPSFLKHLNSEH. The leucine-zipper stretch occupies residues 250-271; the sequence is VQQLELQLSKDKERLQAMMSHL. A ctbp1-binding region spans residues 284-288; the sequence is PLNLV. Positions 293 to 305 are enriched in polar residues; that stretch reads LSKTASEASPQSL. The disordered stretch occupies residues 293 to 325; it reads LSKTASEASPQSLPHTPTTPTAPLTPITQGPSV. Residues 306-320 show a composition bias toward low complexity; sequence PHTPTTPTAPLTPIT. Residues 366-456 constitute a DNA-binding region (fork-head); it reads RPPFTYASLI…PQKISGSPTL (91 aa). Residues 511-578 form a disordered region; sequence MEHTSSNGSD…EDDPVNDDME (68 aa). Residues 515-527 show a composition bias toward low complexity; sequence SSNGSDSSPGRSP. Residues 568–578 show a composition bias toward acidic residues; it reads YEDDPVNDDME.

As to quaternary structure, dimerization is required for DNA-binding. Isoform a, but not isoform b, interacts with ctbp1. In terms of tissue distribution, all isoforms show similar spatial expression. Localized to the animal hemisphere of early cleavage stage embryos. At tailbud stages, expressed in regions of the brain, eye and the splanchnic mesodermal layer of the lateral plate mesoderm surrounding the gut. At stage 35, expressed within the lens of the eye, in distinct regions of the head mesenchyme and in the area anterior to the gut. In the brain the anterior-most expression is restricted to the outer region of the mesencephalon. With ongoing development, additional expression is found in the curling gut.

It is found in the nucleus. Its function is as follows. Transcriptional repressor. The protein is Forkhead box protein P1 of Xenopus laevis (African clawed frog).